Here is a 314-residue protein sequence, read N- to C-terminus: BURP domain-containing protein 8 (314 aa).

An N-terminal signal peptide occupies residues 1 to 16; it reads MDLVRLTSLLPPSVMG. The BURP domain maps to 98–314; it reads FFLEKDLFPG…PLGDMLWVRN (217 aa).

As to expression, expressed in shoot and panicles.

The chain is BURP domain-containing protein 8 (BURP8) from Oryza sativa subsp. japonica (Rice).